Reading from the N-terminus, the 533-residue chain is GMP synthase [glutamine-hydrolyzing] (533 aa).

The region spanning 12-206 is the Glutamine amidotransferase type-1 domain; the sequence is TILVLDFGSQ…AVGICGAEQK (195 aa). Cys88 functions as the Nucleophile in the catalytic mechanism. Active-site residues include His180 and Glu182. One can recognise a GMPS ATP-PPase domain in the interval 207–408; sequence WTMAEFIGQE…LGISPELVGR (202 aa). 235 to 241 contributes to the ATP binding site; that stretch reads SGGVDST. Positions 308, 470, 525, and 531 each coordinate XMP.

In terms of assembly, homodimer. The cofactor is Mg(2+).

The protein resides in the cytoplasm. Its subcellular location is the cytosol. It catalyses the reaction XMP + L-glutamine + ATP + H2O = GMP + L-glutamate + AMP + diphosphate + 2 H(+). The protein operates within purine metabolism; GMP biosynthesis; GMP from XMP (L-Gln route): step 1/1. Functionally, catalyzes the conversion of xanthine monophosphate (XMP) to GMP in the presence of glutamine and ATP through an adenyl-XMP intermediate. The polypeptide is GMP synthase [glutamine-hydrolyzing] (gua1) (Emericella nidulans (strain FGSC A4 / ATCC 38163 / CBS 112.46 / NRRL 194 / M139) (Aspergillus nidulans)).